The chain runs to 201 residues: NADH-quinone oxidoreductase subunit C (201 aa).

This sequence belongs to the complex I 30 kDa subunit family. NDH-1 is composed of 14 different subunits. Subunits NuoB, C, D, E, F, and G constitute the peripheral sector of the complex.

It is found in the cell inner membrane. It carries out the reaction a quinone + NADH + 5 H(+)(in) = a quinol + NAD(+) + 4 H(+)(out). In terms of biological role, NDH-1 shuttles electrons from NADH, via FMN and iron-sulfur (Fe-S) centers, to quinones in the respiratory chain. The immediate electron acceptor for the enzyme in this species is believed to be ubiquinone. Couples the redox reaction to proton translocation (for every two electrons transferred, four hydrogen ions are translocated across the cytoplasmic membrane), and thus conserves the redox energy in a proton gradient. In Ruegeria sp. (strain TM1040) (Silicibacter sp.), this protein is NADH-quinone oxidoreductase subunit C.